The following is a 2412-amino-acid chain: Genome polyprotein 1 (2412 aa).

The segment at 1–23 (MEQTLAQAVSRRGKTNTPMAEER) is disordered. In terms of domain architecture, Helicase ATP-binding spans 474-632 (AMADANNCWS…AARKYPLHVE (159 aa)). An ATP-binding site is contributed by 487–494 (GHTGSGKS). The Helicase C-terminal domain occupies 647 to 813 (GGGDLLDISK…NVPFYMNETF (167 aa)). Y1234 is subject to O-(5'-phospho-RNA)-tyrosine. The Peptidase C4 domain maps to 1359–1574 (ISFGASTGIL…CGYSSHNALF (216 aa)). Catalysis depends on for nuclear inclusion protein A activity residues H1404, D1440, and C1507. The RdRp catalytic domain maps to 1858 to 1982 (WLHGSGDGSR…AISPQFDEEF (125 aa)). The disordered stretch occupies residues 2178-2202 (PTEDDGKLKTPSGARIPSSAADGNW).

Belongs to the bymoviruses polyprotein 1 family. In terms of processing, VPg is uridylylated by the polymerase and is covalently attached to the 5'-end of the genomic RNA. This uridylylated form acts as a nucleotide-peptide primer for the polymerase. The viral RNA1 of bymoviruses is expressed as a single polyprotein which undergoes post-translational proteolytic processing by the main proteinase NIa-pro resulting in the production of at least eight individual proteins.

The protein resides in the host cytoplasmic vesicle. It localises to the virion. The enzyme catalyses RNA(n) + a ribonucleoside 5'-triphosphate = RNA(n+1) + diphosphate. It catalyses the reaction Hydrolyzes glutaminyl bonds, and activity is further restricted by preferences for the amino acids in P6 - P1' that vary with the species of potyvirus, e.g. Glu-Xaa-Xaa-Tyr-Xaa-Gln-|-(Ser or Gly) for the enzyme from tobacco etch virus. The natural substrate is the viral polyprotein, but other proteins and oligopeptides containing the appropriate consensus sequence are also cleaved.. Functionally, indispensable for virus replication. In terms of biological role, mediates the cap-independent, EIF4E-dependent translation of viral genomic RNAs. Binds to the cap-binding site of host EIF4E and thus interferes with the host EIF4E-dependent mRNA export and translation. VPg-RNA directly binds EIF4E and is a template for transcription. Also forms trimeric complexes with EIF4E-EIF4G, which are templates for translation. Has RNA-binding and proteolytic activities. Its function is as follows. An RNA-dependent RNA polymerase that plays an essential role in the virus replication. This is Genome polyprotein 1 from Hordeum vulgare (Barley).